A 521-amino-acid polypeptide reads, in one-letter code: MWNSLHMTQARRPLMLMILDGWGYREASEGNAILAAETPNLNSLLNEFPWCFLECSGEAVGLPEGQMGNSEVGHLNIGAGRVVYQDLTRINLSVRNGDFFENPVLLDAISNVKLNDSSLHLMGLVSYGGVHSYMTHLYALIKLARDKGLKKVYIHAFLDGRDVPPKAALADIRELDAFCKENGSARIATVQGRYYAMDRDKRWERSKLAYDALTLGVAPYTTSDAETAVSDAYARGETDEFVKPTVVTGSDGKPEAVVQDNDSIIFFNFRPDRARQLTWAFENDDFDGFPREKRPKVHYVCMAQYDETLDLPIAFPPEELENVLGEVLSKQGLVQLRIAETEKYAHVTFFLNGGQEKCYDGEDRCLIPSPKVATYDLKPEMSAYEVTDEVIRRIQSGKYDVIVLNFANMDMVGHTGIFEAAVQAVEAVDTCVGRIIEALKKAGGVALITADHGNAEQMENQHTGEPHTAHTSNPVRCIYAGKGEVKALENGKLSDLAPTLLDLLGVPKPEEMKGKSLILNE.

Residues aspartate 20 and serine 70 each contribute to the Mn(2+) site. Serine 70 functions as the Phosphoserine intermediate in the catalytic mechanism. Residues histidine 131, 161 to 162 (RD), arginine 193, arginine 199, 270 to 273 (RPDR), and lysine 343 contribute to the substrate site. 5 residues coordinate Mn(2+): aspartate 410, histidine 414, aspartate 451, histidine 452, and histidine 470.

It belongs to the BPG-independent phosphoglycerate mutase family. It depends on Mn(2+) as a cofactor.

It catalyses the reaction (2R)-2-phosphoglycerate = (2R)-3-phosphoglycerate. The protein operates within carbohydrate degradation; glycolysis; pyruvate from D-glyceraldehyde 3-phosphate: step 3/5. Catalyzes the interconversion of 2-phosphoglycerate and 3-phosphoglycerate. This chain is 2,3-bisphosphoglycerate-independent phosphoglycerate mutase 2, found in Methanosarcina acetivorans (strain ATCC 35395 / DSM 2834 / JCM 12185 / C2A).